Consider the following 237-residue polypeptide: Bax inhibitor 1 (237 aa).

Residues 1–29 (MNIFDRKINFDALLKFSHITPSTQQHLKK) are Cytoplasmic-facing. Residue Lys-7 forms a Glycyl lysine isopeptide (Lys-Gly) (interchain with G-Cter in ubiquitin) linkage. The helical transmembrane segment at 30–50 (VYASFALCMFVAAAGAYVHVV) threads the bilayer. Residues 51–52 (TH) lie on the Lumenal side of the membrane. A helical transmembrane segment spans residues 53 to 73 (FIQAGLLSALGSLALMIWLMA). Residues 74 to 86 (TPHSHETEQKRLG) are Cytoplasmic-facing. A helical transmembrane segment spans residues 87–107 (LLAGFAFLTGVGLGPALELCI). Residues 108 to 112 (AVNPS) lie on the Lumenal side of the membrane. A helical transmembrane segment spans residues 113-133 (ILPTAFMGTAMIFTCFSLSAL). Over 134-139 (YARRRS) the chain is Cytoplasmic. Residues 140–160 (YLFLGGILMSAMSLMLLSSLG) traverse the membrane as a helical segment. Residues 161–166 (NLFFGS) lie on the Lumenal side of the membrane. Residues 167-187 (IWLFQANLYLGLLVMCGFVLF) form a helical membrane-spanning segment. The Cytoplasmic segment spans residues 188–206 (DTQLIIEKAEHGDKDYIWH). The segment at residues 207–227 (CVDLFLDFVTLFRKLMLILAF) is an intramembrane region (helical). Over 228–237 (NEKDKKKEKK) the chain is Cytoplasmic.

This sequence belongs to the BI1 family. Interacts with BCL2. Interacts with BCL2L1. Interacts with ERN1. Ubiquitinated by BFAR, leading to proteasomal degradation. Highly abundant in adult testis.

Its subcellular location is the endoplasmic reticulum membrane. In terms of biological role, endoplasmic reticulum (ER)-resident protein that confers cellular protection as an anti-apoptotic protein by limiting multiple stress-inducing pathways surrounding the endoplasmic reticulum and mitochondria. Inhibits the activities of the key sensor for the endoplasmic reticulum unfolded protein response IRE1alpha/ERN1 both directly and by blocking BAX/BAK binding. Modulates ER calcium homeostasis by acting as a calcium-leak channel. Negatively regulates autophagy and autophagosome formation, especially during periods of nutrient deprivation, and reduces cell survival during starvation. The polypeptide is Bax inhibitor 1 (Tmbim6) (Mus musculus (Mouse)).